The following is a 263-amino-acid chain: Small ribosomal subunit protein eS4 (263 aa).

The region spanning 42–104 (LPLIIFLRNR…TGEHFRLVYD (63 aa)) is the S4 RNA-binding domain.

This sequence belongs to the eukaryotic ribosomal protein eS4 family. Component of the small ribosomal subunit.

It localises to the cytoplasm. Functionally, component of the small ribosomal subunit. The ribosome is a large ribonucleoprotein complex responsible for the synthesis of proteins in the cell. The sequence is that of Small ribosomal subunit protein eS4 (rps4) from Xenopus laevis (African clawed frog).